Reading from the N-terminus, the 315-residue chain is Calumenin-A (315 aa).

Positions 1-19 (MEIRPLLMCFALCVVYATS) are cleaved as a signal peptide. EF-hand domains lie at 68-103 (ESKR…AQKK), 104-139 (YIYE…TYLD), 151-186 (HMMA…EEYD), 188-223 (MKDI…HEDE), 229-264 (WVAT…SDYD), and 265-300 (HAEA…FVGS). Residues aspartate 81, aspartate 83, aspartate 85, glutamate 92, aspartate 117, asparagine 119, aspartate 121, methionine 123, and glutamate 128 each contribute to the Ca(2+) site. Asparagine 131 is a glycosylation site (N-linked (GlcNAc...) asparagine). Residues aspartate 164, asparagine 166, aspartate 168, glutamate 175, aspartate 201, asparagine 203, aspartate 205, glutamate 212, aspartate 242, asparagine 244, aspartate 246, lysine 248, glutamate 253, aspartate 278, asparagine 280, aspartate 282, lysine 284, and glutamate 289 each contribute to the Ca(2+) site. Residues 312–315 (HDEF) carry the Prevents secretion from ER motif.

The protein belongs to the CREC family. In terms of assembly, interacts with ggcx.

It localises to the endoplasmic reticulum membrane. The protein resides in the golgi apparatus. Its subcellular location is the secreted. It is found in the melanosome. The protein localises to the sarcoplasmic reticulum lumen. In terms of biological role, involved in regulation of vitamin K-dependent carboxylation of multiple N-terminal glutamate residues. Seems to inhibit gamma-carboxylase ggcx. Binds 7 calcium ions with a low affinity. This chain is Calumenin-A (calua), found in Salmo salar (Atlantic salmon).